The chain runs to 21 residues: Hemolymph 65 kDa lectin BG04 (21 aa).

As to expression, hemolymph.

It is found in the secreted. In terms of biological role, binds and precipitates antigens of the parasite Echinostoma paraensei. The sequence is that of Hemolymph 65 kDa lectin BG04 (BG04) from Biomphalaria glabrata (Bloodfluke planorb).